Here is a 150-residue protein sequence, read N- to C-terminus: Ribonuclease K6 (150 aa).

Positions 1 to 23 (MVLCFPLLLLLLVLWGPVCLLHA) are cleaved as a signal peptide. Histidine 38 functions as the Proton acceptor in the catalytic mechanism. 4 disulfide bridges follow: cysteine 46-cysteine 104, cysteine 60-cysteine 114, cysteine 78-cysteine 129, and cysteine 85-cysteine 92. N-linked (GlcNAc...) asparagine glycosylation occurs at asparagine 55. Substrate is bound by residues 61 to 65 (KHQNT) and lysine 86. An N-linked (GlcNAc...) asparagine glycan is attached at asparagine 100. Arginine 105 is a substrate binding site. Histidine 145 acts as the Proton donor in catalysis.

This sequence belongs to the pancreatic ribonuclease family. Interacts (via N-terminus) with bacterial lipopolysaccharide (LPS).

It localises to the secreted. The protein localises to the lysosome. It is found in the cytoplasmic granule. In terms of biological role, ribonuclease which shows a preference for the pyrimidines uridine and cytosine. Has potent antibacterial activity against a range of Gram-positive and Gram-negative bacteria, including P.aeruginosa, A.baumanii, M.luteus, S.aureus, E.faecalis, E.faecium, S.saprophyticus and E.coli. Causes loss of bacterial membrane integrity, and also promotes agglutination of Gram-negative bacteria. Probably contributes to urinary tract sterility. Bactericidal activity is independent of RNase activity. This Papio hamadryas (Hamadryas baboon) protein is Ribonuclease K6 (RNASE6).